The sequence spans 98 residues: NADH-ubiquinone oxidoreductase chain 4L (98 aa).

Transmembrane regions (helical) follow at residues 1-21 (MSMV…GLLI), 30-50 (LLCL…TILT), and 61-81 (IILL…LVMI).

The protein belongs to the complex I subunit 4L family. In terms of assembly, core subunit of respiratory chain NADH dehydrogenase (Complex I) which is composed of 45 different subunits.

It is found in the mitochondrion inner membrane. The catalysed reaction is a ubiquinone + NADH + 5 H(+)(in) = a ubiquinol + NAD(+) + 4 H(+)(out). Functionally, core subunit of the mitochondrial membrane respiratory chain NADH dehydrogenase (Complex I) which catalyzes electron transfer from NADH through the respiratory chain, using ubiquinone as an electron acceptor. Part of the enzyme membrane arm which is embedded in the lipid bilayer and involved in proton translocation. This is NADH-ubiquinone oxidoreductase chain 4L (MT-ND4L) from Gulo gulo (Wolverine).